Here is a 185-residue protein sequence, read N- to C-terminus: MSEEELTNGPGPEPQPEPLEVESAPLEAAPAGEPDKALLEAQQQASENWDRFVRAQAEMENLRRRLEKDIQNAHKYALEKFAKELLPVMDSLELGIAASTGDAPDVAKLREGAELTLKQFKSVFEKFGIAVVDPLGEKFNPEQHQAMAMEPAGEAEPNTVVKVFQKGYLLNDRLLRPALVVVAQA.

The interval 1–44 is disordered; it reads MSEEELTNGPGPEPQPEPLEVESAPLEAAPAGEPDKALLEAQQQ.

The protein belongs to the GrpE family. As to quaternary structure, homodimer.

The protein resides in the cytoplasm. In terms of biological role, participates actively in the response to hyperosmotic and heat shock by preventing the aggregation of stress-denatured proteins, in association with DnaK and GrpE. It is the nucleotide exchange factor for DnaK and may function as a thermosensor. Unfolded proteins bind initially to DnaJ; upon interaction with the DnaJ-bound protein, DnaK hydrolyzes its bound ATP, resulting in the formation of a stable complex. GrpE releases ADP from DnaK; ATP binding to DnaK triggers the release of the substrate protein, thus completing the reaction cycle. Several rounds of ATP-dependent interactions between DnaJ, DnaK and GrpE are required for fully efficient folding. The polypeptide is Protein GrpE (Methylococcus capsulatus (strain ATCC 33009 / NCIMB 11132 / Bath)).